Here is a 162-residue protein sequence, read N- to C-terminus: Cytochrome c-type biogenesis protein CcmE (162 aa).

The Cytoplasmic portion of the chain corresponds to 1 to 7 (MTRKQRR). The helical; Signal-anchor for type II membrane protein transmembrane segment at 8 to 28 (LTMIGGSLVVLAIAAALVLNA) threads the bilayer. Residues 29–162 (LRDSIVFFST…EASGKQGVSQ (134 aa)) lie on the Periplasmic side of the membrane. Residues His-122 and Tyr-126 each contribute to the heme site. The segment at 138-162 (QGHWKDDYGPQAGAVEASGKQGVSQ) is disordered.

The protein belongs to the CcmE/CycJ family.

It is found in the cell inner membrane. Heme chaperone required for the biogenesis of c-type cytochromes. Transiently binds heme delivered by CcmC and transfers the heme to apo-cytochromes in a process facilitated by CcmF and CcmH. This Nitrobacter hamburgensis (strain DSM 10229 / NCIMB 13809 / X14) protein is Cytochrome c-type biogenesis protein CcmE.